The following is a 965-amino-acid chain: 26S proteasome regulatory subunit rpn2 (965 aa).

10 PC repeats span residues 385-418, 424-457, 459-493, 494-528, 530-563, 564-599, 600-632, 634-668, 669-699, and 712-744; these read TATA…PSSS, GAFY…EIVQ, GLLL…VAGS, AAGI…EKII, GLGI…TLRY, AGMF…DVRR, AAVC…PHVR, GSAI…FVRQ, GAMI…FEQV, and GATL…SAIV. 2 disordered regions span residues 826-883 and 934-965; these read AKRA…KSET and NRDA…DDDD. 2 stretches are compositionally biased toward basic and acidic residues: residues 827-856 and 874-883; these read KRAE…KEAT and SKKEEPKSET. The segment covering 945 to 965 has biased composition (acidic residues); that stretch reads EPGEQEASPPEDFEYPFDDDD. Residue S952 is modified to Phosphoserine.

Belongs to the proteasome subunit S1 family.

Functionally, acts as a regulatory subunit of the 26S proteasome which is involved in the ATP-dependent degradation of ubiquitinated proteins. This is 26S proteasome regulatory subunit rpn2 (rpn2) from Schizosaccharomyces pombe (strain 972 / ATCC 24843) (Fission yeast).